Here is a 492-residue protein sequence, read N- to C-terminus: Adenosylhomocysteinase (492 aa).

Threonine 68, aspartate 153, and glutamate 215 together coordinate substrate. 216-218 (TTT) lines the NAD(+) pocket. Residues lysine 245 and aspartate 249 each coordinate substrate. NAD(+)-binding positions include asparagine 250, 279 to 284 (GYGDVG), glutamate 302, asparagine 337, 358 to 360 (IGH), and asparagine 406.

It belongs to the adenosylhomocysteinase family. The cofactor is NAD(+).

The protein resides in the cytoplasm. It carries out the reaction S-adenosyl-L-homocysteine + H2O = L-homocysteine + adenosine. It functions in the pathway amino-acid biosynthesis; L-homocysteine biosynthesis; L-homocysteine from S-adenosyl-L-homocysteine: step 1/1. In terms of biological role, may play a key role in the regulation of the intracellular concentration of adenosylhomocysteine. The protein is Adenosylhomocysteinase of Mycobacterium ulcerans (strain Agy99).